The following is a 329-amino-acid chain: Methionyl-tRNA formyltransferase (329 aa).

Ser-117–Pro-120 provides a ligand contact to (6S)-5,6,7,8-tetrahydrofolate.

The protein belongs to the Fmt family.

The enzyme catalyses L-methionyl-tRNA(fMet) + (6R)-10-formyltetrahydrofolate = N-formyl-L-methionyl-tRNA(fMet) + (6S)-5,6,7,8-tetrahydrofolate + H(+). In terms of biological role, attaches a formyl group to the free amino group of methionyl-tRNA(fMet). The formyl group appears to play a dual role in the initiator identity of N-formylmethionyl-tRNA by promoting its recognition by IF2 and preventing the misappropriation of this tRNA by the elongation apparatus. This Paracidovorax citrulli (strain AAC00-1) (Acidovorax citrulli) protein is Methionyl-tRNA formyltransferase.